The sequence spans 547 residues: MDIIFGRNRKEQLEPVRAKVTGKIPAWLQGTLLRNGPGMHTVGESRYNHWFDGLALLHSFTIRDGEVYYRSKYLRSDTYNTNIEANRIVVSEFGTMAYPDPCKNIFSKAFSYLSHTIPDFTDNCLINIMKCGEDFYATSETNYIRKINPQTLETLEKVDYRKYVAVNLATSHPHYDEAGNVLNMGTSIVEKGKTKYVIFKIPATVPEGKKQGKSPWKHTEVFCSIPSRSLLSPSYYHSFGVTENYVIFLEQPFRLDILKMATAYIRRMSWASCLAFHREEKTYIHIIDQRTRQPVQTKFYTDAMVVFHHVNAYEEDGCIVFDVIAYEDNSLYQLFYLANLNQDFKENSRLTSVPTLRRFAVPLHVDKNAEVGTNLIKVASTTATALKEEDGQVYCQPEFLYEGLELPRVNYAHNGKQYRYVFATGVQWSPIPTKIIKYDILTKSSLKWREDDCWPAEPLFVPAPGAKDEDDGVILSAIVSTDPQKLPFLLILDAKSFTELARASVDVDMHMDLHGLFITDMDWDTKKQAASEEQRDRASDCHGAPLT.

Fe cation contacts are provided by His-172, His-237, His-308, and His-514. Basic and acidic residues predominate over residues 528 to 540 (QAASEEQRDRASD). The segment at 528 to 547 (QAASEEQRDRASDCHGAPLT) is disordered.

It belongs to the carotenoid oxygenase family. It depends on Fe(2+) as a cofactor. In terms of tissue distribution, highly expressed in retinal pigment epithelium. Also expressed in kidney, testis, liver, brain, small intestine and colon.

Its subcellular location is the cytoplasm. It is found in the cytosol. The enzyme catalyses all-trans-beta-carotene + O2 = 2 all-trans-retinal. It functions in the pathway cofactor metabolism; retinol metabolism. In terms of biological role, symmetrically cleaves beta-carotene into two molecules of retinal using a dioxygenase mechanism. The sequence is that of Beta,beta-carotene 15,15'-dioxygenase from Homo sapiens (Human).